The following is a 228-amino-acid chain: NAD(P)H-hydrate epimerase (228 aa).

Residues 9 to 214 (AQNIDQELFN…DLLLKKYELE (206 aa)) enclose the YjeF N-terminal domain. 60-64 (NNGGD) contacts (6S)-NADPHX. Positions 61 and 125 each coordinate K(+). Residues 129–135 (GFSFKGE) and Asp-158 each bind (6S)-NADPHX. Position 161 (Ser-161) interacts with K(+).

Belongs to the NnrE/AIBP family. Requires K(+) as cofactor.

The enzyme catalyses (6R)-NADHX = (6S)-NADHX. It carries out the reaction (6R)-NADPHX = (6S)-NADPHX. Functionally, catalyzes the epimerization of the S- and R-forms of NAD(P)HX, a damaged form of NAD(P)H that is a result of enzymatic or heat-dependent hydration. This is a prerequisite for the S-specific NAD(P)H-hydrate dehydratase to allow the repair of both epimers of NAD(P)HX. The sequence is that of NAD(P)H-hydrate epimerase from Nematostella vectensis (Starlet sea anemone).